Here is a 377-residue protein sequence, read N- to C-terminus: Transcription initiation factor IIA subunit 1 (377 aa).

Ala2 carries the post-translational modification N-acetylalanine. Composition is skewed to low complexity over residues 69–79 (QVQQQHQPQQQ), 89–105 (QAQP…TQQV), and 248–280 (QAQI…TGDT). Disordered stretches follow at residues 69-107 (QVQQ…QVLI) and 248-330 (QAQI…QELF). Ser281 and Ser282 each carry phosphoserine; by TAF1. Over residues 281–330 (SSEEDEDEEEDYDDDEEEDKEKDGAEDGQVEEEPLNSEDDVSDEEGQELF) the composition is skewed to acidic residues. A phosphoserine mark is found at Ser317 and Ser322. DNA contacts are provided by His344 and Arg345.

It belongs to the TFIIA subunit 1 family. TFIIA is a heterodimer of the large unprocessed subunit 1 and a small subunit gamma. It was originally believed to be a heterotrimer of an alpha (p35), a beta (p19) and a gamma subunit (p12). TFIIA forms a complex with TBP. Part of TBP-based Pol II pre-initiation complex (PIC), in which Pol II core assembles with general transcription factors and other specific initiation factors including GTF2E1, GTF2E2, GTF2F1, GTF2F2, TCEA1, ERCC2, ERCC3, GTF2H2, GTF2H3, GTF2H4, GTF2H5, GTF2A1, GTF2A2, GTF2B and TBP; this large multi-subunit PIC complex mediates DNA unwinding and targets Pol II core to the transcription start site where the first phosphodiester bond forms. The alpha and beta subunits are postranslationally produced from the precursor formby TASP1. The cleavage promotes proteasomal degradation.

It is found in the nucleus. Its function is as follows. TFIIA is a component of the transcription machinery of RNA polymerase II and plays an important role in transcriptional activation. TFIIA in a complex with TBP mediates transcriptional activity. This Rattus norvegicus (Rat) protein is Transcription initiation factor IIA subunit 1 (Gtf2a1).